Consider the following 226-residue polypeptide: Large ribosomal subunit protein uL1 (226 aa).

Belongs to the universal ribosomal protein uL1 family. As to quaternary structure, part of the 50S ribosomal subunit.

Its function is as follows. Binds directly to 23S rRNA. The L1 stalk is quite mobile in the ribosome, and is involved in E site tRNA release. In terms of biological role, protein L1 is also a translational repressor protein, it controls the translation of the L11 operon by binding to its mRNA. The chain is Large ribosomal subunit protein uL1 from Selenomonas ruminantium.